The chain runs to 571 residues: Urease subunit alpha (571 aa).

A Urease domain is found at 133–571 (GGIDTHIHFV…LPLAQRYFLF (439 aa)). Residues His138, His140, and Lys221 each coordinate Ni(2+). An N6-carboxylysine modification is found at Lys221. His223 lines the substrate pocket. Ni(2+) contacts are provided by His250 and His276. His324 acts as the Proton donor in catalysis. Asp364 lines the Ni(2+) pocket.

The protein belongs to the metallo-dependent hydrolases superfamily. Urease alpha subunit family. As to quaternary structure, heterotrimer of UreA (gamma), UreB (beta) and UreC (alpha) subunits. Three heterotrimers associate to form the active enzyme. Ni cation is required as a cofactor. Carboxylation allows a single lysine to coordinate two nickel ions.

The protein localises to the cytoplasm. The enzyme catalyses urea + 2 H2O + H(+) = hydrogencarbonate + 2 NH4(+). Its pathway is nitrogen metabolism; urea degradation; CO(2) and NH(3) from urea (urease route): step 1/1. The chain is Urease subunit alpha from Anaeromyxobacter sp. (strain K).